Here is a 59-residue protein sequence, read N- to C-terminus: uncharacterized protein (59 aa).

This is an uncharacterized protein from Bacillus subtilis (strain 168).